A 649-amino-acid chain; its full sequence is Acetyl-coenzyme A synthetase (649 aa).

Residues 198–201 (RRGK), Thr-317, and Asn-341 each bind CoA. ATP-binding positions include 393–395 (GEP), 417–422 (DTWWQT), Asp-506, and Arg-521. A CoA-binding site is contributed by Ser-529. Arg-532 contributes to the ATP binding site. Mg(2+) contacts are provided by Val-543, His-545, and Val-548. The residue at position 612 (Lys-612) is an N6-acetyllysine. The segment at 625 to 649 (QPVQGDTSTLEDPTVLERLQASPAL) is disordered.

The protein belongs to the ATP-dependent AMP-binding enzyme family. It depends on Mg(2+) as a cofactor. Acetylated. Deacetylation by the SIR2-homolog deacetylase activates the enzyme.

The enzyme catalyses acetate + ATP + CoA = acetyl-CoA + AMP + diphosphate. Functionally, catalyzes the conversion of acetate into acetyl-CoA (AcCoA), an essential intermediate at the junction of anabolic and catabolic pathways. AcsA undergoes a two-step reaction. In the first half reaction, AcsA combines acetate with ATP to form acetyl-adenylate (AcAMP) intermediate. In the second half reaction, it can then transfer the acetyl group from AcAMP to the sulfhydryl group of CoA, forming the product AcCoA. This is Acetyl-coenzyme A synthetase from Deinococcus radiodurans (strain ATCC 13939 / DSM 20539 / JCM 16871 / CCUG 27074 / LMG 4051 / NBRC 15346 / NCIMB 9279 / VKM B-1422 / R1).